We begin with the raw amino-acid sequence, 602 residues long: Protein SHORT-ROOT 1 (602 aa).

Residues 12–55 (AASEQQQQQQQSASYNSRSTTSSGSRSSSHQTNASYSYYHHSSN) show a composition bias toward low complexity. Disordered stretches follow at residues 12-69 (AASE…YYYG), 101-145 (DFSS…TAAG), and 165-185 (DFSSPASSSGGGTASSGAVGG). Gly residues predominate over residues 56–68 (SGGGGGGGGGYYY). The segment covering 122–145 (PPASSTPTGTAPTPPLSTSSTAAG) has biased composition (low complexity). Over residues 173–185 (SGGGTASSGAVGG) the composition is skewed to gly residues. In terms of domain architecture, GRAS spans 183–601 (VGGGGGGRWA…QPLVWASAWR (419 aa)). Residues 190–253 (RWASQLLLEC…LTASGPRTLR (64 aa)) are leucine repeat I (LRI). The VHIID stretch occupies residues 272 to 349 (ALRFQELSPW…PHLSITTVVS (78 aa)). The VHIID motif lies at 311-315 (FHILD). Residues 365-401 (EIGQRMEKFARLMGVPFRFRAVHHSGDLAELDLDALD) form a leucine repeat II (LRII) region. The interval 411-517 (LAVNCVNSLR…ERGAGRAIVD (107 aa)) is PFYRE. Residues 520-601 (SCPASESMER…QPLVWASAWR (82 aa)) form an SAW region.

It belongs to the GRAS family. Interacts with SCR1. Interacts with SMOS1. Expressed in leaves and roots. Detected in the stele, the endodermis and part of the cortex.

Its subcellular location is the nucleus. In terms of biological role, transcription factor required for the asymmetric cell division involved in radial pattern formation in roots. Essential for both cell division and cell specification. The polypeptide is Protein SHORT-ROOT 1 (Oryza sativa subsp. japonica (Rice)).